The chain runs to 137 residues: Probable 4-amino-4-deoxy-L-arabinose-phosphoundecaprenol flippase subunit ArnF (137 aa).

The Cytoplasmic portion of the chain corresponds to 1 to 3; that stretch reads MNA. The helical transmembrane segment at 4 to 24 threads the bilayer; the sequence is LRGWLAALGSMLLASAAQLGM. Over 25-44 the chain is Periplasmic; the sequence is RWGMSRLPLPEAWAGQTPER. A helical membrane pass occupies residues 45–65; sequence AALLAVALAVAAYAASLLCWL. Residues 66–76 are Cytoplasmic-facing; the sequence is AALRHLPLGRA. Residues 77–97 traverse the membrane as a helical segment; sequence YSLLSASYALVYLLAASLPAF. The Periplasmic portion of the chain corresponds to 98–100; that stretch reads DET. The chain crosses the membrane as a helical span at residues 101–121; the sequence is FSTSKILGVGLVVLGVLTVNA. Residues 122 to 137 lie on the Cytoplasmic side of the membrane; it reads RRTAAAPAHHPSRKAP.

This sequence belongs to the ArnF family. Heterodimer of ArnE and ArnF.

It is found in the cell inner membrane. The protein operates within bacterial outer membrane biogenesis; lipopolysaccharide biosynthesis. Functionally, translocates 4-amino-4-deoxy-L-arabinose-phosphoundecaprenol (alpha-L-Ara4N-phosphoundecaprenol) from the cytoplasmic to the periplasmic side of the inner membrane. The polypeptide is Probable 4-amino-4-deoxy-L-arabinose-phosphoundecaprenol flippase subunit ArnF (Pseudomonas aeruginosa (strain LESB58)).